A 219-amino-acid polypeptide reads, in one-letter code: uncharacterized protein (219 aa).

The helical transmembrane segment at 13–32 threads the bilayer; it reads VFGLFLFSLIFFGLLSLATF.

The protein localises to the membrane. This is an uncharacterized protein from Aquifex aeolicus (strain VF5).